A 497-amino-acid chain; its full sequence is Acetyl-coenzyme A carboxylase carboxyl transferase subunit beta, chloroplastic (497 aa).

The 268-residue stretch at 230 to 497 (LWVQCENCYG…FFPLNQNSIK (268 aa)) folds into the CoA carboxyltransferase N-terminal domain. The Zn(2+) site is built by Cys234, Cys237, Cys253, and Cys256. A C4-type zinc finger spans residues 234 to 256 (CENCYGLNYKKFLKSKMNICEQC).

It belongs to the AccD/PCCB family. As to quaternary structure, acetyl-CoA carboxylase is a heterohexamer composed of biotin carboxyl carrier protein, biotin carboxylase and 2 subunits each of ACCase subunit alpha and ACCase plastid-coded subunit beta (accD). It depends on Zn(2+) as a cofactor.

It localises to the plastid. It is found in the chloroplast stroma. The catalysed reaction is N(6)-carboxybiotinyl-L-lysyl-[protein] + acetyl-CoA = N(6)-biotinyl-L-lysyl-[protein] + malonyl-CoA. It participates in lipid metabolism; malonyl-CoA biosynthesis; malonyl-CoA from acetyl-CoA: step 1/1. Its function is as follows. Component of the acetyl coenzyme A carboxylase (ACC) complex. Biotin carboxylase (BC) catalyzes the carboxylation of biotin on its carrier protein (BCCP) and then the CO(2) group is transferred by the transcarboxylase to acetyl-CoA to form malonyl-CoA. The protein is Acetyl-coenzyme A carboxylase carboxyl transferase subunit beta, chloroplastic of Carica papaya (Papaya).